Here is a 2410-residue protein sequence, read N- to C-terminus: Reducing polyketide synthase FUB1 (2410 aa).

A compositionally biased stretch (low complexity) spans 1–42; sequence MTLSNGSNGANGTSNGNGAHPSANGFHNAANGGANNGSANGG. The tract at residues 1–52 is disordered; it reads MTLSNGSNGANGTSNGNGAHPSANGFHNAANGGANNGSANGGAEHDAGRPQV. The region spanning 57–479 is the Ketosynthase family 3 (KS3) domain; it reads SSAIAVIGVS…GANAHAVLDD (423 aa). Catalysis depends on for beta-ketoacyl synthase activity residues cysteine 230, histidine 365, and histidine 403. Positions 608 to 929 are malonyl-CoA:ACP transacylase (MAT) domain; the sequence is TFIFTGQGAQ…FSAIKRKQDA (322 aa). Serine 699 (for malonyltransferase activity) is an active-site residue. Residues 994–1127 form an N-terminal hotdog fold region; sequence LELLGVRDPR…GLVSTSYKHD (134 aa). The region spanning 994–1307 is the PKS/mFAS DH domain; it reads LELLGVRDPR…TVPLRGASDS (314 aa). Residues 995-1302 form a dehydratase (DH) domain region; that stretch reads ELLGVRDPRS…LKGCKTVPLR (308 aa). Histidine 1026 serves as the catalytic Proton acceptor; for dehydratase activity. The interval 1155–1307 is C-terminal hotdog fold; that stretch reads LPSVDPTVFY…TVPLRGASDS (153 aa). The active-site Proton donor; for dehydratase activity is aspartate 1220. Residues 1714–2026 are enoyl reductase (ER) domain; sequence GLLDTLEYLS…SGGHVGKIVL (313 aa). The tract at residues 2050–2226 is ketoreductase (KR) domain; it reads ATYVLIGGLG…AATSINLSLV (177 aa). Residues 2329-2406 form the Carrier domain; sequence EVYEIVLQQL…GFTKKVMAKS (78 aa). Position 2366 is an O-(pantetheine 4'-phosphoryl)serine (serine 2366).

It functions in the pathway mycotoxin biosynthesis. In terms of biological role, reducing polyketide synthase; part of the gene cluster that mediates the biosynthesis of fusaric acid, a mycotoxin with low to moderate toxicity to animals and humans, but with high phytotoxic properties. L-aspartate is suggested as fusaric acid amino acid precursor that is activated and further processed to O-acetyl-L-homoserine by cluster enzymes aspartate kinase FUB3 and homoserine O-acetyltransferase FUB5, as well as enzymes of the primary metabolism. The polyketide synthase (PKS) FUB1 generates the triketide trans-2-hexenal which is presumptively released by the hydrolase FUB4 and linked to the NRPS-bound amino acid precursor by NAD(P)-dependent dehydrogenase FUB6. FUB1, FUB4, and the non-canonical NRPS Fub8 may form an enzyme complex. Further processing of the NRPS-bound intermediate might be carried out by FUB6 and the sulfhydrylase FUB7, enabling a spontaneous electrocyclization to close the carbon backbone of fusaric acid. Dihydrofusaric acid is likely to be released via reduction by the thioester reductase (TR) domain of FUB8 whereupon the final oxidation to fusaric acid may (also) be performed by the FMN-dependent dehydrogenase FUB9. The chain is Reducing polyketide synthase FUB1 from Gibberella fujikuroi (strain CBS 195.34 / IMI 58289 / NRRL A-6831) (Bakanae and foot rot disease fungus).